Here is a 331-residue protein sequence, read N- to C-terminus: Cytosolic Fe-S cluster assembly factor CFD1 (331 aa).

25–32 (GKGGVGKS) lines the ATP pocket. Cys-211 and Cys-214 together coordinate [4Fe-4S] cluster.

The protein belongs to the Mrp/NBP35 ATP-binding proteins family. NUBP2/CFD1 subfamily. In terms of assembly, heterotetramer of 2 NBP35 and 2 CFD1 chains. It depends on [4Fe-4S] cluster as a cofactor.

It is found in the cytoplasm. Functionally, component of the cytosolic iron-sulfur (Fe/S) protein assembly (CIA) machinery. Required for maturation of extramitochondrial Fe-S proteins. The NBP35-CFD1 heterotetramer forms a Fe-S scaffold complex, mediating the de novo assembly of an Fe-S cluster and its transfer to target apoproteins. The polypeptide is Cytosolic Fe-S cluster assembly factor CFD1 (Cryptococcus neoformans var. neoformans serotype D (strain B-3501A) (Filobasidiella neoformans)).